The following is a 237-amino-acid chain: Phosphoglycolate phosphatase (237 aa).

Asp15 (nucleophile) is an active-site residue. Asp15, Asp17, and Asp177 together coordinate Mg(2+).

It belongs to the HAD-like hydrolase superfamily. CbbY/CbbZ/Gph/YieH family. Requires Mg(2+) as cofactor.

The catalysed reaction is 2-phosphoglycolate + H2O = glycolate + phosphate. It participates in organic acid metabolism; glycolate biosynthesis; glycolate from 2-phosphoglycolate: step 1/1. In terms of biological role, specifically catalyzes the dephosphorylation of 2-phosphoglycolate. Is involved in the dissimilation of the intracellular 2-phosphoglycolate formed during the DNA repair of 3'-phosphoglycolate ends, a major class of DNA lesions induced by oxidative stress. This chain is Phosphoglycolate phosphatase, found in Caulobacter vibrioides (strain ATCC 19089 / CIP 103742 / CB 15) (Caulobacter crescentus).